The following is a 393-amino-acid chain: Chorismate synthase (393 aa).

NADP(+) contacts are provided by R40 and R46. Residues R129–S131, Q249–A250, G301, K316–T320, and R342 contribute to the FMN site.

This sequence belongs to the chorismate synthase family. As to quaternary structure, homotetramer. FMNH2 serves as cofactor.

It catalyses the reaction 5-O-(1-carboxyvinyl)-3-phosphoshikimate = chorismate + phosphate. It functions in the pathway metabolic intermediate biosynthesis; chorismate biosynthesis; chorismate from D-erythrose 4-phosphate and phosphoenolpyruvate: step 7/7. Functionally, catalyzes the anti-1,4-elimination of the C-3 phosphate and the C-6 proR hydrogen from 5-enolpyruvylshikimate-3-phosphate (EPSP) to yield chorismate, which is the branch point compound that serves as the starting substrate for the three terminal pathways of aromatic amino acid biosynthesis. This reaction introduces a second double bond into the aromatic ring system. The sequence is that of Chorismate synthase from Pelobacter propionicus (strain DSM 2379 / NBRC 103807 / OttBd1).